The following is a 245-amino-acid chain: Orotidine 5'-phosphate decarboxylase (245 aa).

Substrate-binding positions include D22, K44, 71-80 (DLKFHDIPNT), T131, R192, Q201, G221, and R222. K73 acts as the Proton donor in catalysis.

Belongs to the OMP decarboxylase family. Type 1 subfamily. Homodimer.

It catalyses the reaction orotidine 5'-phosphate + H(+) = UMP + CO2. The protein operates within pyrimidine metabolism; UMP biosynthesis via de novo pathway; UMP from orotate: step 2/2. Functionally, catalyzes the decarboxylation of orotidine 5'-monophosphate (OMP) to uridine 5'-monophosphate (UMP). This Salmonella typhimurium (strain LT2 / SGSC1412 / ATCC 700720) protein is Orotidine 5'-phosphate decarboxylase.